The chain runs to 408 residues: MSVKTLDDLLAEGVQGRGVLVRSDLNVPLDDDGNITDPGRVIASVPTLQALAEAGAKVIVTAHLGRPKGEPDPKLSLAPVAAALGEKLGRHVQLAGDVVGTDALARAEGLTDGDVLLLENIRFDARETSKDDSERLSLAKALAALVEGPDGSPGVFVSDGFGVVHRKQASVYDVATLLPHYAGTLVAAEVKVLQQLTSSTDRPYAVVLGGSKVSDKLAVIENLATKADSLIIGGGMCFTFLAAQGFSVGSSLLQEEMVDTCRRLLDEYADVIHLPVDIVVADKFAADAEAETVAADRIPDGKMGLDIGPGSVERFTALLSNAKTVFWNGPMGVFEFPAFAAGTKGVAEAIIGATGKGAFSVVGGGDSAAAVRRLGLPEDGFSHISTGGGASLEYLEGKELPGIQVLES.

Residues 24 to 26 (DLN), arginine 40, 63 to 66 (HLGR), arginine 122, and arginine 166 each bind substrate. ATP is bound by residues lysine 216, glycine 304, glutamate 335, and 364–367 (GGDS).

It belongs to the phosphoglycerate kinase family. Monomer.

It is found in the cytoplasm. The enzyme catalyses (2R)-3-phosphoglycerate + ATP = (2R)-3-phospho-glyceroyl phosphate + ADP. It participates in carbohydrate degradation; glycolysis; pyruvate from D-glyceraldehyde 3-phosphate: step 2/5. The chain is Phosphoglycerate kinase from Mycolicibacterium smegmatis (strain ATCC 700084 / mc(2)155) (Mycobacterium smegmatis).